A 551-amino-acid chain; its full sequence is ETS domain-containing transcription factor ERF (551 aa).

Residues threonine 3 and threonine 7 each carry the phosphothreonine modification. 2 positions are modified to phosphoserine: serine 20 and serine 24. Residues 27–107 (IQLWHFILEL…KGKRFTYKFN (81 aa)) constitute a DNA-binding region (ETS). 2 disordered regions span residues 130–169 (QSAP…SSSS) and 184–304 (GSVS…SHFS). Serine 185 and serine 190 each carry phosphoserine. Pro residues predominate over residues 239–250 (RGGPEPLSPFPV). Residues 251-268 (SPLAGPGSLLPPQLSPAL) show a composition bias toward low complexity. Residues 289 to 301 (SGGGGPSGSGGGS) are compositionally biased toward gly residues. Serine 327 carries the phosphoserine modification. Residues 342 to 476 (PQRPDKCPLP…KPEPGEAPGV (135 aa)) form a disordered region. Residues 348–361 (CPLPPMAPETPPVP) are compositionally biased toward pro residues. The span at 362–373 (SSASSSSSSSSS) shows a compositional bias: low complexity. Residues 404–413 (GGSGSGGLAE) are compositionally biased toward gly residues. Phosphoserine occurs at positions 433 and 437. Positions 433 to 453 (SEGESEEVEVTDISDEDEEDG) are enriched in acidic residues. Threonine 443 is modified (phosphothreonine). Serine 446 is modified (phosphoserine). Residues lysine 467, lysine 483, and lysine 514 each participate in a glycyl lysine isopeptide (Lys-Gly) (interchain with G-Cter in SUMO2) cross-link. The interval 495-551 (RLEGGGCLSGGPEDEGEDKKVRGDVGPGESGGPLTPRRVSSDLQHATAQLSLEHRDS) is disordered. At threonine 529 the chain carries Phosphothreonine; by MAPK1. 3 positions are modified to phosphoserine: serine 534, serine 535, and serine 551. The span at 535-544 (SDLQHATAQL) shows a compositional bias: polar residues.

It belongs to the ETS family. Phosphorylated by multiple kinases including MAPK1/ERK2 at THR-529. Phosphorylation regulates the activity of ERF. As to expression, expressed along the osteogenic margins of the developing calvarial bones, in a similar distribution to that observed for the master osteogenic regulator RUNX2.

It localises to the nucleus. Potent transcriptional repressor that binds to the H1 element of the Ets2 promoter. May regulate other genes involved in cellular proliferation. Required for extraembryonic ectoderm differentiation, ectoplacental cone cavity closure, and chorioallantoic attachment. May be important for regulating trophoblast stem cell differentiation. The polypeptide is ETS domain-containing transcription factor ERF (Erf) (Mus musculus (Mouse)).